A 334-amino-acid chain; its full sequence is MAFNLKNRHLLSLAHHSTEEIKFLVGLAADLKEAKYCGTEQPLLKGKNIALIFEKASTRTRCAFEVAAHDQGAHVTYLGPSGSHIGHKESMKDTARVLGRMYDGIEYRGFHQSVVEELAEYAGVPVFNGLTDEFHPTQMLADALTMREHAEKPFHEIKFAYVGDGRNNMGRSLLLLGAKLGMDVRIGAPEGLQPEAELVERCREWAEQSGGKVLVTASAEEAVRDVDFIHTDVWVSMGEPVESWSERVGTLLPFQINDALVKAAGNPRVKVMHCLPAFHNSETAVGAEVAKTYPELANGIEVTESVFESPACIAFDQAENRMHTIKAVLVSSLA.

Carbamoyl phosphate is bound by residues 57–60 (STRT), R108, and 135–138 (HPTQ). Residues N168, D232, and 236-237 (SM) contribute to the L-ornithine site. Carbamoyl phosphate-binding positions include 274-275 (CL) and R321.

It belongs to the aspartate/ornithine carbamoyltransferase superfamily. OTCase family.

It is found in the cytoplasm. The catalysed reaction is carbamoyl phosphate + L-ornithine = L-citrulline + phosphate + H(+). It functions in the pathway amino-acid biosynthesis; L-arginine biosynthesis; L-arginine from L-ornithine and carbamoyl phosphate: step 1/3. Its function is as follows. Reversibly catalyzes the transfer of the carbamoyl group from carbamoyl phosphate (CP) to the N(epsilon) atom of ornithine (ORN) to produce L-citrulline. The protein is Ornithine carbamoyltransferase of Cutibacterium acnes (strain DSM 16379 / KPA171202) (Propionibacterium acnes).